Here is a 38-residue protein sequence, read N- to C-terminus: Esterase-5 (38 aa).

The interval 1-38 (SAAADPLIVELPNGKVRGRDNEGYYEAEGIPRAEPPVG) is disordered.

The protein belongs to the type-B carboxylesterase/lipase family.

It catalyses the reaction a carboxylic ester + H2O = an alcohol + a carboxylate + H(+). The polypeptide is Esterase-5 (Est-5) (Drosophila mojavensis (Fruit fly)).